The primary structure comprises 340 residues: MNKMSPLYVLALCCLATTVFAKYDCTNNGGYGCKYGGTCHFYGFCICPKGFQGEDCGLKTELISTAANCTAECKNGGTCYESDRCYCPHGFIGDMCEIPDTVARCAPDRMIIEAYRPLGFVGEVYMFQNRKSCALKQVPSDIRDMMKLERVVLHSDKTECALTRTPDTPKLGDVTMKTTVVSTHNYNQFGPRDSIMDVSCVHTNSFQGSTKEITETAFPFRMVALDMNGEPVQALAANESIILQFEPVGIPDVRGVMVEYLEVYSINANSNEVVSKTIIENGCVLRTAQQHLEIPIRNYSEMXRQGTSWVARSAMRAFILLPGDHCYSSLDYASVPEVPR.

Residues 1-21 form the signal peptide; it reads MNKMSPLYVLALCCLATTVFA. 2 consecutive EGF-like domains span residues 22–57 and 65–97; these read KYDC…EDCG and TAAN…DMCE. Disulfide bonds link C25–C39, C33–C45, C47–C56, C69–C79, C73–C85, and C87–C96.

As to expression, component of the organic matrix of calcified shell layers.

The protein is Gigasin-2 of Magallana gigas (Pacific oyster).